The chain runs to 490 residues: Calcium-dependent protein kinase 12 (490 aa).

The 259-residue stretch at 22 to 280 (YFLGQVLGQG…AHQVLCHPWI (259 aa)) folds into the Protein kinase domain. Residues 28–36 (LGQGQFGTT) and Lys-51 each bind ATP. Asp-146 serves as the catalytic Proton acceptor. Position 186 is a phosphoserine (Ser-186). Positions 286–316 (APDKPLDCAVVSRLKKFSAMNKLKKMALRVI) are autoinhibitory domain. EF-hand domains are found at residues 323–358 (EEIG…VGSE), 359–394 (LMES…LNKL), 395–430 (EREE…FGIN), and 434–464 (LDEM…GNGT). Ca(2+) is bound by residues Asp-336, Asp-338, Ser-340, Thr-342, Glu-347, Asp-372, Asp-374, Ser-376, Thr-378, Glu-383, Asp-408, Asp-410, Ser-412, Tyr-414, Glu-419, Asp-442, Asp-444, Asp-446, Gln-448, and Glu-453.

This sequence belongs to the protein kinase superfamily. Ser/Thr protein kinase family. CDPK subfamily. Interacts weakly with DI19. As to expression, ubiquitously expressed.

The enzyme catalyses L-seryl-[protein] + ATP = O-phospho-L-seryl-[protein] + ADP + H(+). It carries out the reaction L-threonyl-[protein] + ATP = O-phospho-L-threonyl-[protein] + ADP + H(+). Its activity is regulated as follows. Activated by calcium. Autophosphorylation may play an important role in the regulation of the kinase activity. Its function is as follows. May play a role in signal transduction pathways that involve calcium as a second messenger. The protein is Calcium-dependent protein kinase 12 (CPK12) of Arabidopsis thaliana (Mouse-ear cress).